The sequence spans 169 residues: Ribosome maturation factor RimM (169 aa).

In terms of domain architecture, PRC barrel spans 94–168 (EEGQYYYHQI…KVIVELLEGL (75 aa)).

It belongs to the RimM family. In terms of assembly, binds ribosomal protein uS19.

It is found in the cytoplasm. In terms of biological role, an accessory protein needed during the final step in the assembly of 30S ribosomal subunit, possibly for assembly of the head region. Essential for efficient processing of 16S rRNA. May be needed both before and after RbfA during the maturation of 16S rRNA. It has affinity for free ribosomal 30S subunits but not for 70S ribosomes. The sequence is that of Ribosome maturation factor RimM from Limosilactobacillus fermentum (strain NBRC 3956 / LMG 18251) (Lactobacillus fermentum).